The following is a 661-amino-acid chain: Galactan 5-O-arabinofuranosyltransferase (661 aa).

13 helical membrane passes run 26–46 (LVAI…LWMG), 64–84 (VASA…WLWL), 108–128 (ALTY…VLAI), 194–214 (AFQP…VPVW), 217–237 (ITGS…IILA), 243–263 (PYAA…SRIA), 265–285 (GDKF…TFYT), 286–306 (LFTG…AAIV), 312–332 (PLLW…ISWG), 362–382 (VPFL…IYLV), 393–413 (MWVG…ITLL), 418–438 (LGFR…VLGI), and 458–478 (TATH…LYYA).

The protein belongs to the glycosyltransferase 85 family.

It localises to the cell membrane. It catalyses the reaction Adds an alpha-D-arabinofuranosyl group from trans,octacis-decaprenylphospho-beta-D-arabinofuranose at the 5-O-position of the eighth, tenth and twelfth galactofuranose unit of the galactofuranan chain of [beta-D-galactofuranosyl-(1-&gt;5)-beta-D-galactofuranosyl-(1-&gt;6)]14-beta-D-galactofuranosyl-(1-&gt;5)-beta-D-galactofuranosyl-(1-&gt;4)-alpha-L-rhamnopyranosyl-(1-&gt;3)-N-acetyl-alpha-D-glucosaminyl-diphospho-trans,octacis-decaprenol.. The protein operates within cell wall biogenesis; cell wall polysaccharide biosynthesis. Functionally, involved in the biosynthesis of the arabinogalactan (AG) region of the mycolylarabinogalactan-peptidoglycan (mAGP) complex, an essential component of the cell wall. Catalyzes the addition of the first key arabinofuranosyl (Araf) residue from the sugar donor decaprenyl-phospho-arabinose (DPA) on the C-5 of a 6-linked galactofuranosyl (Galf) of the galactan domain, thus 'priming' the galactan for further elaboration by other arabinofuranosyltransferases. The sequence is that of Galactan 5-O-arabinofuranosyltransferase from Corynebacterium glutamicum (strain ATCC 13032 / DSM 20300 / JCM 1318 / BCRC 11384 / CCUG 27702 / LMG 3730 / NBRC 12168 / NCIMB 10025 / NRRL B-2784 / 534).